A 205-amino-acid polypeptide reads, in one-letter code: N-(5'-phosphoribosyl)anthranilate isomerase (205 aa).

The protein belongs to the TrpF family.

It catalyses the reaction N-(5-phospho-beta-D-ribosyl)anthranilate = 1-(2-carboxyphenylamino)-1-deoxy-D-ribulose 5-phosphate. It functions in the pathway amino-acid biosynthesis; L-tryptophan biosynthesis; L-tryptophan from chorismate: step 3/5. This Thermotoga neapolitana (strain ATCC 49049 / DSM 4359 / NBRC 107923 / NS-E) protein is N-(5'-phosphoribosyl)anthranilate isomerase.